The following is a 288-amino-acid chain: Acetyl-coenzyme A carboxylase carboxyl transferase subunit beta (288 aa).

Positions 34-288 constitute a CoA carboxyltransferase N-terminal domain; sequence LFAKCPGCKQ…TLLSFHGGVQ (255 aa). Zn(2+) contacts are provided by Cys38, Cys41, Cys56, and Cys59. A C4-type zinc finger spans residues 38 to 59; sequence CPGCKQAIYQKDLGQAKICPNC.

This sequence belongs to the AccD/PCCB family. In terms of assembly, acetyl-CoA carboxylase is a heterohexamer composed of biotin carboxyl carrier protein (AccB), biotin carboxylase (AccC) and two subunits each of ACCase subunit alpha (AccA) and ACCase subunit beta (AccD). It depends on Zn(2+) as a cofactor.

It is found in the cytoplasm. The enzyme catalyses N(6)-carboxybiotinyl-L-lysyl-[protein] + acetyl-CoA = N(6)-biotinyl-L-lysyl-[protein] + malonyl-CoA. The protein operates within lipid metabolism; malonyl-CoA biosynthesis; malonyl-CoA from acetyl-CoA: step 1/1. Functionally, component of the acetyl coenzyme A carboxylase (ACC) complex. Biotin carboxylase (BC) catalyzes the carboxylation of biotin on its carrier protein (BCCP) and then the CO(2) group is transferred by the transcarboxylase to acetyl-CoA to form malonyl-CoA. The chain is Acetyl-coenzyme A carboxylase carboxyl transferase subunit beta from Streptococcus thermophilus (strain CNRZ 1066).